We begin with the raw amino-acid sequence, 502 residues long: UPF0371 protein CLH_2534 (502 aa).

It belongs to the UPF0371 family.

The chain is UPF0371 protein CLH_2534 from Clostridium botulinum (strain Alaska E43 / Type E3).